Consider the following 309-residue polypeptide: MPDLLLLGLIGALTLLLLLTLLAFAGYSGLLTGVTVSAGSPPIRNITVAYKFHVGSYGDTGHLFTESCSISPKLRSIAVYYDNPHTVPPEKCRCAVGSILSEGEESPSPELIHLYQKFGFKIFSFPAPSHVVIATFPYTTPISIWLAARRVHPALDTYIKERKLCAHPRLEIYHQDKIHFMCPLARQGDFYVPEVKETERKCRELAEATDTQTDGTGADTSDASSVSLDVRPGSRETSATTLSPGAGNRGWDDGDNRSEHSYSESGASGSSFEELDLEGEGPLGEPRLNPEAKLLGPPRELSTPERGEE.

Over 1-3 the chain is Lumenal; sequence MPD. Residues 4-24 traverse the membrane as a helical; Signal-anchor for type III membrane protein segment; sequence LLLLGLIGALTLLLLLTLLAF. Residues 25–309 are Cytoplasmic-facing; sequence AGYSGLLTGV…ELSTPERGEE (285 aa). Residues 193–309 are disordered; it reads PEVKETERKC…ELSTPERGEE (117 aa). Residues 208-225 are compositionally biased toward low complexity; sequence ATDTQTDGTGADTSDASS. Phosphoserine is present on residues S238 and S243. Residues 250 to 262 show a composition bias toward basic and acidic residues; that stretch reads GWDDGDNRSEHSY. Low complexity predominate over residues 263-272; that stretch reads SESGASGSSF. The LIR motif signature appears at 272–275; it reads FEEL.

In terms of assembly, interacts (via the LIR motif) with ATG8 family proteins MAP1LC3A, MAP1LC3B, GABARAP and GABARAPL1. Interacts with VCP/p97; bridging VCP/p97 to covalent DNA-protein cross-links (DPCs). Interacts with TOP1 (when sumoylated).

It localises to the endoplasmic reticulum membrane. Its subcellular location is the cytoplasmic vesicle. It is found in the autophagosome. The protein localises to the cytoplasm. The protein resides in the cytosol. It localises to the nucleus. Its subcellular location is the chromosome. In terms of biological role, major reticulophagy (also called ER-phagy) receptor that acts independently of other candidate reticulophagy receptors to remodel subdomains of the endoplasmic reticulum into autophagosomes upon nutrient stress, which then fuse with lysosomes for endoplasmic reticulum turnover. The ATG8-containing isolation membrane (IM) cradles a tubular segment of TEX264-positive ER near a three-way junction, allowing the formation of a synapse of 2 juxtaposed membranes with trans interaction between the TEX264 and ATG8 proteins. Expansion of the IM would extend the capture of ER, possibly through a 'zipper-like' process involving continued trans TEX264-ATG8 interactions, until poorly understood mechanisms lead to the fission of relevant membranes and, ultimately, autophagosomal membrane closure. Also involved in the repair of covalent DNA-protein cross-links (DPCs) during DNA synthesis: acts by bridging VCP/p97 to covalent DNA-protein cross-links (DPCs) and initiating resolution of DPCs by SPRTN. This chain is Testis-expressed protein 264 homolog, found in Mus musculus (Mouse).